Here is a 332-residue protein sequence, read N- to C-terminus: Transcription factor ZEB2 (332 aa).

The interval 1–37 is disordered; that stretch reads MQSTESFHALPTRSDVEDPNERRKIQNRIAQKKHRQK. Basic and acidic residues predominate over residues 14–24; sequence SDVEDPNERRK. One can recognise a bZIP domain in the interval 17 to 50; that stretch reads EDPNERRKIQNRIAQKKHRQKMKRRIEELETKVN. A basic motif region spans residues 21–43; the sequence is ERRKIQNRIAQKKHRQKMKRRIE. The interval 45-52 is leucine-zipper; sequence LETKVNNQ. Residues 106–170 are disordered; the sequence is MHDSPRPNQQ…EGSLPTRQHD (65 aa). The span at 111–134 shows a compositional bias: polar residues; it reads RPNQQQRLSVSGMPSSPTSTSNVA. Positions 143–155 are enriched in low complexity; the sequence is HSSASNHLSSLSL. The span at 160 to 170 shows a compositional bias: polar residues; the sequence is TEGSLPTRQHD.

This sequence belongs to the bZIP family.

Its subcellular location is the nucleus. In terms of biological role, transcription factor that specifically controls transcription of the zearalenone biosynthesis cluster genes. This is Transcription factor ZEB2 from Gibberella zeae (strain ATCC MYA-4620 / CBS 123657 / FGSC 9075 / NRRL 31084 / PH-1) (Wheat head blight fungus).